Consider the following 342-residue polypeptide: Trans-3-hydroxy-L-proline dehydratase (342 aa).

S90 (proton acceptor) is an active-site residue. Residues 91–92 (GS), D252, and 257–258 (GT) contribute to the substrate site.

It belongs to the proline racemase family.

It catalyses the reaction trans-3-hydroxy-L-proline = 1-pyrroline-2-carboxylate + H2O. The catalysed reaction is trans-4-hydroxy-L-proline = cis-4-hydroxy-D-proline. Its function is as follows. Catalyzes the dehydration of trans-3-hydroxy-L-proline (t3LHyp) to Delta(1)-pyrroline-2-carboxylate (Pyr2C). Can also catalyze the epimerization of trans-4-hydroxy-L-proline (t4LHyp) to cis-4-hydroxy-D-proline (c4DHyp), albeit with 30-fold lower efficiency. Is likely involved in both degradation pathways that convert t3LHyp to L-proline and t4LHyp to alpha-ketoglutarate, which would allow A.tumefaciens to grow on t3LHyp or t4LHyp as a sole carbon source. Displays no proline racemase activity. This chain is Trans-3-hydroxy-L-proline dehydratase, found in Agrobacterium fabrum (strain C58 / ATCC 33970) (Agrobacterium tumefaciens (strain C58)).